The chain runs to 283 residues: Pantothenate synthetase (283 aa).

Residue 26 to 33 (MGNLHEGH) participates in ATP binding. H33 (proton donor) is an active-site residue. Q57 is a (R)-pantoate binding site. Q57 is a binding site for beta-alanine. Residue 144–147 (GKKD) coordinates ATP. Position 150 (Q150) interacts with (R)-pantoate. Residues I173 and 181–184 (LSSR) each bind ATP.

The protein belongs to the pantothenate synthetase family. Homodimer.

The protein localises to the cytoplasm. The enzyme catalyses (R)-pantoate + beta-alanine + ATP = (R)-pantothenate + AMP + diphosphate + H(+). The protein operates within cofactor biosynthesis; (R)-pantothenate biosynthesis; (R)-pantothenate from (R)-pantoate and beta-alanine: step 1/1. Functionally, catalyzes the condensation of pantoate with beta-alanine in an ATP-dependent reaction via a pantoyl-adenylate intermediate. This is Pantothenate synthetase from Polynucleobacter necessarius subsp. necessarius (strain STIR1).